The primary structure comprises 151 residues: Protein Turandot Z (151 aa).

The N-terminal stretch at 1-23 is a signal peptide; sequence MSRLIHLSFVLALLACLTGTISA.

Belongs to the Turandot family.

It is found in the secreted. Functionally, a humoral factor that may play a role in stress tolerance. This Drosophila persimilis (Fruit fly) protein is Protein Turandot Z.